Here is a 260-residue protein sequence, read N- to C-terminus: 14-3-3-like protein C (260 aa).

The protein belongs to the 14-3-3 family.

The polypeptide is 14-3-3-like protein C (Nicotiana tabacum (Common tobacco)).